A 189-amino-acid chain; its full sequence is Transcription factor FapR (189 aa).

This sequence belongs to the FapR family.

Its function is as follows. Transcriptional factor involved in regulation of membrane lipid biosynthesis by repressing genes involved in fatty acid and phospholipid metabolism. The polypeptide is Transcription factor FapR (Listeria monocytogenes serotype 4b (strain CLIP80459)).